Reading from the N-terminus, the 426-residue chain is Serine--tRNA ligase (426 aa).

235-237 is an L-serine binding site; the sequence is TAE. Residue 266–268 coordinates ATP; it reads RRE. Glutamate 289 contributes to the L-serine binding site. 353–356 is a binding site for ATP; the sequence is EISS. Serine 389 is a binding site for L-serine.

This sequence belongs to the class-II aminoacyl-tRNA synthetase family. Type-1 seryl-tRNA synthetase subfamily. As to quaternary structure, homodimer. The tRNA molecule binds across the dimer.

The protein resides in the cytoplasm. It catalyses the reaction tRNA(Ser) + L-serine + ATP = L-seryl-tRNA(Ser) + AMP + diphosphate + H(+). The catalysed reaction is tRNA(Sec) + L-serine + ATP = L-seryl-tRNA(Sec) + AMP + diphosphate + H(+). It functions in the pathway aminoacyl-tRNA biosynthesis; selenocysteinyl-tRNA(Sec) biosynthesis; L-seryl-tRNA(Sec) from L-serine and tRNA(Sec): step 1/1. Functionally, catalyzes the attachment of serine to tRNA(Ser). Is also able to aminoacylate tRNA(Sec) with serine, to form the misacylated tRNA L-seryl-tRNA(Sec), which will be further converted into selenocysteinyl-tRNA(Sec). The polypeptide is Serine--tRNA ligase (Nostoc punctiforme (strain ATCC 29133 / PCC 73102)).